The primary structure comprises 121 residues: MVVMRAKDLLGRSGEALAADFLENQGMRIVDRNWRCPDGEIDIVAIDGDTLVVAEVKTRKSLDYGHPFEAVDAAKLARLHRLSSSWCRQHQLNAPRRRIDVVSVIDNGVVEPQLEHLRGVC.

This sequence belongs to the UPF0102 family.

This is UPF0102 protein AAur_2443 from Paenarthrobacter aurescens (strain TC1).